The primary structure comprises 170 residues: Crossover junction endodeoxyribonuclease RuvC (170 aa).

Catalysis depends on residues Asp11, Glu71, and Asp143. Residues Asp11, Glu71, and Asp143 each contribute to the Mg(2+) site.

It belongs to the RuvC family. In terms of assembly, homodimer which binds Holliday junction (HJ) DNA. The HJ becomes 2-fold symmetrical on binding to RuvC with unstacked arms; it has a different conformation from HJ DNA in complex with RuvA. In the full resolvosome a probable DNA-RuvA(4)-RuvB(12)-RuvC(2) complex forms which resolves the HJ. It depends on Mg(2+) as a cofactor.

Its subcellular location is the cytoplasm. It carries out the reaction Endonucleolytic cleavage at a junction such as a reciprocal single-stranded crossover between two homologous DNA duplexes (Holliday junction).. Its function is as follows. The RuvA-RuvB-RuvC complex processes Holliday junction (HJ) DNA during genetic recombination and DNA repair. Endonuclease that resolves HJ intermediates. Cleaves cruciform DNA by making single-stranded nicks across the HJ at symmetrical positions within the homologous arms, yielding a 5'-phosphate and a 3'-hydroxyl group; requires a central core of homology in the junction. The consensus cleavage sequence is 5'-(A/T)TT(C/G)-3'. Cleavage occurs on the 3'-side of the TT dinucleotide at the point of strand exchange. HJ branch migration catalyzed by RuvA-RuvB allows RuvC to scan DNA until it finds its consensus sequence, where it cleaves and resolves the cruciform DNA. This chain is Crossover junction endodeoxyribonuclease RuvC, found in Agrobacterium fabrum (strain C58 / ATCC 33970) (Agrobacterium tumefaciens (strain C58)).